The primary structure comprises 321 residues: Glycerol-3-phosphate phosphatase (321 aa).

D34 acts as the Nucleophile in catalysis. Residues D34, D36, and D260 each coordinate Mg(2+). Residue D36 is the Proton donor of the active site.

This sequence belongs to the HAD-like hydrolase superfamily. CbbY/CbbZ/Gph/YieH family. In terms of assembly, homodimer. Mg(2+) serves as cofactor. Detected in all tissues including red cells, lymphocytes and cultured fibroblasts (at protein level). The highest activities occur in skeletal muscle and cardiac muscle.

It catalyses the reaction O-phospho-L-tyrosyl-[protein] + H2O = L-tyrosyl-[protein] + phosphate. It carries out the reaction sn-glycerol 1-phosphate + H2O = glycerol + phosphate. The enzyme catalyses sn-glycerol 3-phosphate + H2O = glycerol + phosphate. In terms of biological role, glycerol-3-phosphate phosphatase hydrolyzing glycerol-3-phosphate into glycerol. Thereby, regulates the cellular levels of glycerol-3-phosphate a metabolic intermediate of glucose, lipid and energy metabolism. Was also shown to have a 2-phosphoglycolate phosphatase activity and a tyrosine-protein phosphatase activity. However, their physiological relevance is unclear. In vitro, also has a phosphatase activity toward ADP, ATP, GDP and GTP. This is Glycerol-3-phosphate phosphatase from Homo sapiens (Human).